Consider the following 107-residue polypeptide: Cell division protein FtsB (107 aa).

Topologically, residues 1 to 3 (MGK) are cytoplasmic. The chain crosses the membrane as a helical span at residues 4-21 (LTLLLLILLGWLQYSLWL). Residues 22–107 (GKNGVHDFVR…IPSTQNNAQQ (86 aa)) are Periplasmic-facing. Residues 39–62 (QEVNNGKLKARNDQLFAEIDDLNG) adopt a coiled-coil conformation.

The protein belongs to the FtsB family. As to quaternary structure, part of a complex composed of FtsB, FtsL and FtsQ.

Its subcellular location is the cell inner membrane. Essential cell division protein. May link together the upstream cell division proteins, which are predominantly cytoplasmic, with the downstream cell division proteins, which are predominantly periplasmic. The protein is Cell division protein FtsB of Yersinia enterocolitica serotype O:8 / biotype 1B (strain NCTC 13174 / 8081).